Here is a 446-residue protein sequence, read N- to C-terminus: Adenylosuccinate synthetase (446 aa).

GTP is bound by residues 20–26 and 48–50; these read GDEGKGK and GHT. The Proton acceptor role is filled by Asp21. Residues Asp21 and Gly48 each contribute to the Mg(2+) site. IMP contacts are provided by residues 21 to 24, 46 to 49, Thr137, Arg151, Gln232, Thr247, and Arg319; these read DEGK and NAGH. The active-site Proton donor is His49. Position 315-321 (315-321) interacts with substrate; the sequence is SVTGRPR. Residues Arg321, 347-349, and 429-431 each bind GTP; these read KLD and STG.

Belongs to the adenylosuccinate synthetase family. Homodimer. Mg(2+) is required as a cofactor.

The protein resides in the cytoplasm. It carries out the reaction IMP + L-aspartate + GTP = N(6)-(1,2-dicarboxyethyl)-AMP + GDP + phosphate + 2 H(+). Its pathway is purine metabolism; AMP biosynthesis via de novo pathway; AMP from IMP: step 1/2. Plays an important role in the de novo pathway of purine nucleotide biosynthesis. Catalyzes the first committed step in the biosynthesis of AMP from IMP. This is Adenylosuccinate synthetase from Polynucleobacter asymbioticus (strain DSM 18221 / CIP 109841 / QLW-P1DMWA-1) (Polynucleobacter necessarius subsp. asymbioticus).